Here is a 580-residue protein sequence, read N- to C-terminus: Multidrug resistance-like ATP-binding protein MdlB (580 aa).

The 286-residue stretch at 25 to 310 (IILAFFLLLS…ITIQQSILQQ (286 aa)) folds into the ABC transmembrane type-1 domain. The next 5 helical transmembrane spans lie at 26–46 (ILAF…PILI), 61–81 (FQLI…AVFF), 142–162 (VGPT…AMFT), 165–185 (WHMA…MSIY), and 258–278 (LLSA…SIGV). One can recognise an ABC transporter domain in the interval 341 to 575 (INIKNLSFKY…KGFYWKMYNF (235 aa)). 375-382 (GQTGSGKS) contacts ATP.

This sequence belongs to the ABC transporter superfamily. Drug exporter-2 (TC 3.A.1.117) family.

The protein localises to the cell membrane. It carries out the reaction ATP + H2O + xenobioticSide 1 = ADP + phosphate + xenobioticSide 2.. The chain is Multidrug resistance-like ATP-binding protein MdlB (mdlB) from Buchnera aphidicola subsp. Schizaphis graminum (strain Sg).